Consider the following 285-residue polypeptide: MTAAFKSEMAQRDRLELNKLRKLLRREVGRAIADFNMIEDGDKVMCCLSGGKDSYAMLDILLNLKKHAPISFEVIAVNLDQKQPGFPEHVLPEYLSSLGVEYYVIERDTYSIVKDKIPEGKTTCGLCSRLRRGILYDFAVEHKCTKIALGHHRDDIMETLFLNMFYGGKMRAMPPKLKSDDGRNIVIRPLAYCREKDIERYAGLREFPIIPCNLCGSQENLQRQNIKMMLQDWDKRFPGRLENMFRAVQNVLPSHLCDTRLYDFDKLERYSMEPEEFNQISVLNL.

A PP-loop motif motif is present at residues 49 to 54 (SGGKDS). Cysteine 124, cysteine 127, and cysteine 215 together coordinate [4Fe-4S] cluster.

Belongs to the TtcA family. As to quaternary structure, homodimer. Mg(2+) serves as cofactor. It depends on [4Fe-4S] cluster as a cofactor.

The protein localises to the cytoplasm. It carries out the reaction cytidine(32) in tRNA + S-sulfanyl-L-cysteinyl-[cysteine desulfurase] + AH2 + ATP = 2-thiocytidine(32) in tRNA + L-cysteinyl-[cysteine desulfurase] + A + AMP + diphosphate + H(+). It functions in the pathway tRNA modification. Catalyzes the ATP-dependent 2-thiolation of cytidine in position 32 of tRNA, to form 2-thiocytidine (s(2)C32). The sulfur atoms are provided by the cysteine/cysteine desulfurase (IscS) system. This chain is tRNA-cytidine(32) 2-sulfurtransferase, found in Hahella chejuensis (strain KCTC 2396).